The following is a 294-amino-acid chain: Ribosomal RNA small subunit methyltransferase A (294 aa).

Residues Asn31, Leu33, Gly58, Glu79, Asp111, and Asn136 each contribute to the S-adenosyl-L-methionine site.

The protein belongs to the class I-like SAM-binding methyltransferase superfamily. rRNA adenine N(6)-methyltransferase family. RsmA subfamily.

The protein localises to the cytoplasm. It carries out the reaction adenosine(1518)/adenosine(1519) in 16S rRNA + 4 S-adenosyl-L-methionine = N(6)-dimethyladenosine(1518)/N(6)-dimethyladenosine(1519) in 16S rRNA + 4 S-adenosyl-L-homocysteine + 4 H(+). In terms of biological role, specifically dimethylates two adjacent adenosines (A1518 and A1519) in the loop of a conserved hairpin near the 3'-end of 16S rRNA in the 30S particle. May play a critical role in biogenesis of 30S subunits. This Lactobacillus acidophilus (strain ATCC 700396 / NCK56 / N2 / NCFM) protein is Ribosomal RNA small subunit methyltransferase A.